The sequence spans 130 residues: Ribosome-binding factor A (130 aa).

Belongs to the RbfA family. Monomer. Binds 30S ribosomal subunits, but not 50S ribosomal subunits or 70S ribosomes.

Its subcellular location is the cytoplasm. In terms of biological role, one of several proteins that assist in the late maturation steps of the functional core of the 30S ribosomal subunit. Associates with free 30S ribosomal subunits (but not with 30S subunits that are part of 70S ribosomes or polysomes). Required for efficient processing of 16S rRNA. May interact with the 5'-terminal helix region of 16S rRNA. This chain is Ribosome-binding factor A, found in Prochlorococcus marinus (strain AS9601).